The chain runs to 424 residues: Elongation factor 1-alpha (424 aa).

In terms of domain architecture, tr-type G spans 5-223 (KPHMNLVIIG…NALQVPAKPV (219 aa)). The interval 14 to 21 (GHVDHGKS) is G1. 14 to 21 (GHVDHGKS) contributes to the GTP binding site. Ser-21 contacts Mg(2+). The G2 stretch occupies residues 70-74 (GVTID). The tract at residues 91–94 (DAPG) is G3. Residues 91 to 95 (DAPGH) and 148 to 151 (NKMD) contribute to the GTP site. A G4 region spans residues 148–151 (NKMD). Positions 187–189 (SGY) are G5.

This sequence belongs to the TRAFAC class translation factor GTPase superfamily. Classic translation factor GTPase family. EF-Tu/EF-1A subfamily.

It localises to the cytoplasm. The enzyme catalyses GTP + H2O = GDP + phosphate + H(+). Its function is as follows. GTP hydrolase that promotes the GTP-dependent binding of aminoacyl-tRNA to the A-site of ribosomes during protein biosynthesis. This is Elongation factor 1-alpha from Picrophilus torridus (strain ATCC 700027 / DSM 9790 / JCM 10055 / NBRC 100828 / KAW 2/3).